The primary structure comprises 239 residues: Transcriptional regulatory protein DcuR (239 aa).

The Response regulatory domain occupies 3-121 (NVLIIDDDAM…RFEEALTGWR (119 aa)). At Asp-56 the chain carries 4-aspartylphosphate. A DNA-binding region (H-T-H motif) is located at residues 181–200 (TDELANEVNISRVSCRKYLI).

Phosphorylated and activated by DcuS.

Its subcellular location is the cytoplasm. In terms of biological role, member of the two-component regulatory system DcuR/DcuS. Involved in the C4-dicarboxylate-stimulated regulation of the genes encoding the anaerobic fumarate respiratory system (frdABCD; nuoAN; dcuB; dcuC; sdhCDAB; etc.). Weakly regulates the aerobic C4-dicarboxylate transporter dctA. This is Transcriptional regulatory protein DcuR (dcuR) from Escherichia coli O157:H7.